The primary structure comprises 121 residues: MSITKDQILEAFAAMSVMEVVELIEAMEEKFGVSAAAAVVSGGAEAAVVEEQTEFNVVLTAHGDNKVAVIKAIRGATGLGLKEAKAMSEAAPVAVKEGVSKEEAEALKKELTEAGASVEIK.

The protein belongs to the bacterial ribosomal protein bL12 family. Homodimer. Part of the ribosomal stalk of the 50S ribosomal subunit. Forms a multimeric L10(L12)X complex, where L10 forms an elongated spine to which 2 to 4 L12 dimers bind in a sequential fashion. Binds GTP-bound translation factors.

Functionally, forms part of the ribosomal stalk which helps the ribosome interact with GTP-bound translation factors. Is thus essential for accurate translation. The chain is Large ribosomal subunit protein bL12 from Shewanella baltica (strain OS185).